We begin with the raw amino-acid sequence, 108 residues long: Vacuolar ATPase assembly integral membrane protein VMA21 (108 aa).

The Cytoplasmic segment spans residues 1–34; that stretch reads MASRRSAAAKKEDFSFEAAATQSAHEAQEGFPSS. The helical transmembrane segment at 35–55 threads the bilayer; the sequence is VIIKLVLVTVAMICAPLGTYF. Residues 56–68 are Lumenal-facing; that stretch reads GTLNTICGGDSSY. Residues 69–89 form a helical membrane-spanning segment; the sequence is AGALAAISVNVVLIIYLIIAA. The Cytoplasmic portion of the chain corresponds to 90–108; sequence REDTGESEEERKGKEGKEE.

The protein belongs to the VMA21 family.

It localises to the endoplasmic reticulum membrane. The protein resides in the endoplasmic reticulum-Golgi intermediate compartment membrane. It is found in the cytoplasmic vesicle. The protein localises to the COPII-coated vesicle membrane. Functionally, required for the assembly of the V0 complex of the vacuolar ATPase (V-ATPase) in the endoplasmic reticulum. The protein is Vacuolar ATPase assembly integral membrane protein VMA21 of Ajellomyces capsulatus (strain NAm1 / WU24) (Darling's disease fungus).